The primary structure comprises 148 residues: Protein H2A.6 (148 aa).

A disordered region spans residues G120–E148. 2 short sequence motifs (SPKK motif) span residues S129–K132 and S138–K141. Basic residues predominate over residues S129–E148.

The protein belongs to the histone H2A family. In terms of assembly, the nucleosome is a histone octamer containing two molecules each of H2A, H2B, H3 and H4 assembled in one H3-H4 heterotetramer and two H2A-H2B heterodimers. The octamer wraps approximately 147 bp of DNA. Abundant in meristematic tissues.

Its subcellular location is the nucleus. It is found in the chromosome. Functionally, core component of nucleosome. Nucleosomes wrap and compact DNA into chromatin, limiting DNA accessibility to the cellular machineries which require DNA as a template. Histones thereby play a central role in transcription regulation, DNA repair, DNA replication and chromosomal stability. DNA accessibility is regulated via a complex set of post-translational modifications of histones, also called histone code, and nucleosome remodeling. The chain is Protein H2A.6 (H2A-3) from Triticum aestivum (Wheat).